Consider the following 209-residue polypeptide: Thiamine-phosphate synthase (209 aa).

4-amino-2-methyl-5-(diphosphooxymethyl)pyrimidine-binding positions include 41–45 (QYRNK) and Asn73. The Mg(2+) site is built by Asp74 and Asp93. A 4-amino-2-methyl-5-(diphosphooxymethyl)pyrimidine-binding site is contributed by Ser112. 139–141 (SST) contacts 2-[(2R,5Z)-2-carboxy-4-methylthiazol-5(2H)-ylidene]ethyl phosphate. Lys142 provides a ligand contact to 4-amino-2-methyl-5-(diphosphooxymethyl)pyrimidine. Gly168 provides a ligand contact to 2-[(2R,5Z)-2-carboxy-4-methylthiazol-5(2H)-ylidene]ethyl phosphate.

It belongs to the thiamine-phosphate synthase family. Mg(2+) serves as cofactor.

It carries out the reaction 2-[(2R,5Z)-2-carboxy-4-methylthiazol-5(2H)-ylidene]ethyl phosphate + 4-amino-2-methyl-5-(diphosphooxymethyl)pyrimidine + 2 H(+) = thiamine phosphate + CO2 + diphosphate. It catalyses the reaction 2-(2-carboxy-4-methylthiazol-5-yl)ethyl phosphate + 4-amino-2-methyl-5-(diphosphooxymethyl)pyrimidine + 2 H(+) = thiamine phosphate + CO2 + diphosphate. The enzyme catalyses 4-methyl-5-(2-phosphooxyethyl)-thiazole + 4-amino-2-methyl-5-(diphosphooxymethyl)pyrimidine + H(+) = thiamine phosphate + diphosphate. It functions in the pathway cofactor biosynthesis; thiamine diphosphate biosynthesis; thiamine phosphate from 4-amino-2-methyl-5-diphosphomethylpyrimidine and 4-methyl-5-(2-phosphoethyl)-thiazole: step 1/1. Its function is as follows. Condenses 4-methyl-5-(beta-hydroxyethyl)thiazole monophosphate (THZ-P) and 2-methyl-4-amino-5-hydroxymethyl pyrimidine pyrophosphate (HMP-PP) to form thiamine monophosphate (TMP). The polypeptide is Thiamine-phosphate synthase (Methylobacillus flagellatus (strain ATCC 51484 / DSM 6875 / VKM B-1610 / KT)).